Reading from the N-terminus, the 666-residue chain is DNA-directed RNA polymerase III subunit rpc3 (666 aa).

Disordered stretches follow at residues 130-153 and 375-455; these read HEPHANGNSNETNGATNGNGVHSY and SRLD…TESR. Residues 135–153 show a composition bias toward polar residues; the sequence is NGNSNETNGATNGNGVHSY. The leucine-zipper stretch occupies residues 593–614; the sequence is TYKAMSRCLQRLDVEKRRKANI.

The protein belongs to the RNA polymerase beta chain family. In terms of assembly, component of the RNA polymerase III (Pol III) complex consisting of 17 subunits.

The protein resides in the nucleus. Its function is as follows. DNA-dependent RNA polymerase catalyzes the transcription of DNA into RNA using the four ribonucleoside triphosphates as substrates. Specific core component of RNA polymerase III which synthesizes small RNAs, such as 5S rRNA and tRNAs. This is DNA-directed RNA polymerase III subunit rpc3 (rpc82) from Botryotinia fuckeliana (strain B05.10) (Noble rot fungus).